Reading from the N-terminus, the 203-residue chain is Small ribosomal subunit protein uS5 (203 aa).

Residues 49-112 (FEERVVKIKR…KNANNNLIKV (64 aa)) enclose the S5 DRBM domain.

The protein belongs to the universal ribosomal protein uS5 family. In terms of assembly, part of the 30S ribosomal subunit. Contacts proteins S4 and S8.

Functionally, with S4 and S12 plays an important role in translational accuracy. In terms of biological role, located at the back of the 30S subunit body where it stabilizes the conformation of the head with respect to the body. In Ureaplasma parvum serovar 3 (strain ATCC 700970), this protein is Small ribosomal subunit protein uS5.